Reading from the N-terminus, the 251-residue chain is Hydroxyacylglutathione hydrolase (251 aa).

Residues His-53, His-55, Asp-57, His-58, His-110, Asp-127, and His-165 each contribute to the Zn(2+) site.

It belongs to the metallo-beta-lactamase superfamily. Glyoxalase II family. Monomer. Zn(2+) is required as a cofactor.

The catalysed reaction is an S-(2-hydroxyacyl)glutathione + H2O = a 2-hydroxy carboxylate + glutathione + H(+). Its pathway is secondary metabolite metabolism; methylglyoxal degradation; (R)-lactate from methylglyoxal: step 2/2. Thiolesterase that catalyzes the hydrolysis of S-D-lactoyl-glutathione to form glutathione and D-lactic acid. This Serratia proteamaculans (strain 568) protein is Hydroxyacylglutathione hydrolase.